A 236-amino-acid chain; its full sequence is 1-(5-phosphoribosyl)-5-[(5-phosphoribosylamino)methylideneamino] imidazole-4-carboxamide isomerase (236 aa).

The Proton acceptor role is filled by D8. D128 (proton donor) is an active-site residue.

Belongs to the HisA/HisF family.

The protein localises to the cytoplasm. It carries out the reaction 1-(5-phospho-beta-D-ribosyl)-5-[(5-phospho-beta-D-ribosylamino)methylideneamino]imidazole-4-carboxamide = 5-[(5-phospho-1-deoxy-D-ribulos-1-ylimino)methylamino]-1-(5-phospho-beta-D-ribosyl)imidazole-4-carboxamide. It functions in the pathway amino-acid biosynthesis; L-histidine biosynthesis; L-histidine from 5-phospho-alpha-D-ribose 1-diphosphate: step 4/9. The sequence is that of 1-(5-phosphoribosyl)-5-[(5-phosphoribosylamino)methylideneamino] imidazole-4-carboxamide isomerase from Nitrosopumilus maritimus (strain SCM1).